We begin with the raw amino-acid sequence, 313 residues long: MSESQSEFPGGGTTGDIVRTMQEAQERAAVLAQALPFLRRYAGDTIVVKYGGHAMVDDSLSNAFGHDIALLKLVGVNPVIVHGGGPQISAMLTRLQIPSTFVDGLRVTDAAMVDVIEMVLAGKVNKQVAGLINQAGALAVGISGKDGGLITARRLQRTTRDASGQERALDLGFVGEPTHIDPRVLYALSGSGLIPVVAPVGIGEAGETYNINADTAAGAIAGAVHATRLLMLTDVPGVLDETGALIPELTAEEARRGIASGMISGGMIPKVETCLEAVRSGARAAVILDGRVPHACLLELFTEAGPGTLIRGE.

Residues 84 to 85 (GG), R106, and N210 each bind substrate.

It belongs to the acetylglutamate kinase family. ArgB subfamily.

It localises to the cytoplasm. The enzyme catalyses N-acetyl-L-glutamate + ATP = N-acetyl-L-glutamyl 5-phosphate + ADP. It participates in amino-acid biosynthesis; L-arginine biosynthesis; N(2)-acetyl-L-ornithine from L-glutamate: step 2/4. Functionally, catalyzes the ATP-dependent phosphorylation of N-acetyl-L-glutamate. This is Acetylglutamate kinase from Gluconacetobacter diazotrophicus (strain ATCC 49037 / DSM 5601 / CCUG 37298 / CIP 103539 / LMG 7603 / PAl5).